The primary structure comprises 98 residues: NADH-ubiquinone oxidoreductase chain 4L (98 aa).

A run of 3 helical transmembrane segments spans residues 1-21, 26-46, and 59-79; these read MTPT…GLTF, LLSA…SMAL, and APML…ALLV.

This sequence belongs to the complex I subunit 4L family. As to quaternary structure, core subunit of respiratory chain NADH dehydrogenase (Complex I) which is composed of 45 different subunits.

It is found in the mitochondrion inner membrane. The catalysed reaction is a ubiquinone + NADH + 5 H(+)(in) = a ubiquinol + NAD(+) + 4 H(+)(out). Core subunit of the mitochondrial membrane respiratory chain NADH dehydrogenase (Complex I) which catalyzes electron transfer from NADH through the respiratory chain, using ubiquinone as an electron acceptor. Part of the enzyme membrane arm which is embedded in the lipid bilayer and involved in proton translocation. This Danio rerio (Zebrafish) protein is NADH-ubiquinone oxidoreductase chain 4L (mt-nd4l).